The following is a 579-amino-acid chain: Vacuolar protein 8 (579 aa).

Residue Gly-2 is the site of N-myristoyl glycine attachment. Residues Cys-4, Cys-5, and Cys-7 are each lipidated (S-palmitoyl cysteine). 9 ARM repeats span residues 39-76 (NKDQYDFYSGKPLRALTTLVYSDNLNLQRSAALAFAEI), 77-116 (TEKYVSPVSRDVLEPILMLLTNPDPQIRIASCAALGNLAV), 118-157 (NENKLLIVEMGGLEPLIEQMKSDNVEVQCNAVGCITNLAT), 159-198 (DDNKIEIAQSGALVPLTKLARSSNIRVQRNATGALLNMTH), 200-239 (GENRKELVDAGAVPVLVSLLSSMDADVQYYCTTALSNIAV), 241-282 (ESNR…NLAS), 284-323 (TNYQLEIVRAGGLPDLVQLIQSDSLPLVLASVACIRNISI), 325-365 (PLNE…NLAA), and 409-448 (DNTKYDLLQQDVLKVLIPMTMSQDQEISGNSAAAVANLIS). The span at 534-556 (QDTNIDHNGNSNNIEGNGRSNKQ) shows a compositional bias: polar residues. The tract at residues 534-560 (QDTNIDHNGNSNNIEGNGRSNKQSSEK) is disordered.

It belongs to the beta-catenin family.

It is found in the vacuole membrane. Functions in both vacuole inheritance and protein targeting from the cytoplasm to vacuole. This is Vacuolar protein 8 (VAC8) from Kluyveromyces lactis (strain ATCC 8585 / CBS 2359 / DSM 70799 / NBRC 1267 / NRRL Y-1140 / WM37) (Yeast).